Consider the following 299-residue polypeptide: MSEAVGIVVALQANYLEVELDQAPEQGLSRLLCTRRTRLSHRGETVHVGDRVRVEAIDPVQARAVVSGVEPRCSWLTRPQVANVSLVVVALAVDQPAFDPDQASRFLLTAERTGLPVQLLLTKGDLMEEHQRFALVERLMGWGYDSLVVSSQTGEGVEVLSQRLKDTELAVLCGPSGVGKSSVLNCLMPHLALRVGAVSGRLQRGRHTTRHVELFPIAPGSRVADTPGFNRPDLPDDPSELGMLFPELRVQLSPWPCRFRDCLHRQEPGCGINREWERFEFYKDALQECSDLSRPSRAG.

Residues 73-232 (CSWLTRPQVA…VADTPGFNRP (160 aa)) enclose the CP-type G domain. GTP contacts are provided by residues 122 to 125 (TKGD) and 174 to 182 (GPSGVGKSS). Zn(2+)-binding residues include cysteine 257, cysteine 262, histidine 264, and cysteine 270.

The protein belongs to the TRAFAC class YlqF/YawG GTPase family. RsgA subfamily. In terms of assembly, monomer. Associates with 30S ribosomal subunit, binds 16S rRNA. Zn(2+) is required as a cofactor.

It is found in the cytoplasm. Its function is as follows. One of several proteins that assist in the late maturation steps of the functional core of the 30S ribosomal subunit. Helps release RbfA from mature subunits. May play a role in the assembly of ribosomal proteins into the subunit. Circularly permuted GTPase that catalyzes slow GTP hydrolysis, GTPase activity is stimulated by the 30S ribosomal subunit. The chain is Small ribosomal subunit biogenesis GTPase RsgA from Parasynechococcus marenigrum (strain WH8102).